A 217-amino-acid polypeptide reads, in one-letter code: Uracil-DNA glycosylase (217 aa).

The Proton acceptor role is filled by Asp62.

This sequence belongs to the uracil-DNA glycosylase (UDG) superfamily. UNG family.

It localises to the cytoplasm. It catalyses the reaction Hydrolyzes single-stranded DNA or mismatched double-stranded DNA and polynucleotides, releasing free uracil.. Functionally, excises uracil residues from the DNA which can arise as a result of misincorporation of dUMP residues by DNA polymerase or due to deamination of cytosine. The chain is Uracil-DNA glycosylase from Streptococcus equi subsp. equi (strain 4047).